The chain runs to 74 residues: Insertion element IS986 uncharacterized 8.2 kDa protein (74 aa).

The sequence is that of Insertion element IS986 uncharacterized 8.2 kDa protein from Mycobacterium tuberculosis.